The chain runs to 909 residues: Valine--tRNA ligase (909 aa).

The short motif at 52–62 (PNVTGVLHVGH) is the 'HIGH' region element. Positions 542-546 (KMSKS) match the 'KMSKS' region motif. Lys-545 is a binding site for ATP. The stretch at 843–902 (IDIDQLKKRFEKELEKNEQNASKIDSKLKNENFVKNAPPEVIEGEKEKHAEFLRRIEKLK) forms a coiled coil.

It belongs to the class-I aminoacyl-tRNA synthetase family. ValS type 1 subfamily. In terms of assembly, monomer.

The protein resides in the cytoplasm. It carries out the reaction tRNA(Val) + L-valine + ATP = L-valyl-tRNA(Val) + AMP + diphosphate. Catalyzes the attachment of valine to tRNA(Val). As ValRS can inadvertently accommodate and process structurally similar amino acids such as threonine, to avoid such errors, it has a 'posttransfer' editing activity that hydrolyzes mischarged Thr-tRNA(Val) in a tRNA-dependent manner. This chain is Valine--tRNA ligase, found in Treponema denticola (strain ATCC 35405 / DSM 14222 / CIP 103919 / JCM 8153 / KCTC 15104).